We begin with the raw amino-acid sequence, 449 residues long: Exodeoxyribonuclease 7 large subunit (449 aa).

It belongs to the XseA family. In terms of assembly, heterooligomer composed of large and small subunits.

It is found in the cytoplasm. The enzyme catalyses Exonucleolytic cleavage in either 5'- to 3'- or 3'- to 5'-direction to yield nucleoside 5'-phosphates.. In terms of biological role, bidirectionally degrades single-stranded DNA into large acid-insoluble oligonucleotides, which are then degraded further into small acid-soluble oligonucleotides. This Lacticaseibacillus paracasei (strain ATCC 334 / BCRC 17002 / CCUG 31169 / CIP 107868 / KCTC 3260 / NRRL B-441) (Lactobacillus paracasei) protein is Exodeoxyribonuclease 7 large subunit.